We begin with the raw amino-acid sequence, 200 residues long: Recombination protein RecR (200 aa).

The C4-type zinc finger occupies 59 to 74 (CDICGNVCETSPCPVC). Residues 82–177 (SVICVVEEPK…KVTRLASGLP (96 aa)) enclose the Toprim domain.

Belongs to the RecR family.

In terms of biological role, may play a role in DNA repair. It seems to be involved in an RecBC-independent recombinational process of DNA repair. It may act with RecF and RecO. This Bifidobacterium adolescentis (strain ATCC 15703 / DSM 20083 / NCTC 11814 / E194a) protein is Recombination protein RecR.